We begin with the raw amino-acid sequence, 474 residues long: Lactococcin A secretion protein LcnD (474 aa).

Residues 1–21 (MFDKKLLESSELYDKRYRNFS) lie on the Cytoplasmic side of the membrane. The helical transmembrane segment at 22–44 (TLIILPLFILLVGGVIFTFFAHK) threads the bilayer. At 45–474 (ELTVISTGSI…LDKIMGRGNQ (430 aa)) the chain is on the extracellular side.

It belongs to the membrane fusion protein (MFP) (TC 8.A.1) family.

Its subcellular location is the cell membrane. In terms of biological role, involved in the secretion of lactococcin A. This chain is Lactococcin A secretion protein LcnD (lcnD), found in Lactococcus lactis subsp. cremoris (Streptococcus cremoris).